A 204-amino-acid polypeptide reads, in one-letter code: Probable calcium-binding protein CML46 (204 aa).

EF-hand domains are found at residues 72-106 (LEFQ…LGLS), 132-167 (PSLE…LGLK), and 170-204 (SNLE…NNFC). The Ca(2+) site is built by aspartate 145, asparagine 147, aspartate 149, and aspartate 156.

Functionally, potential calcium sensor. In Arabidopsis thaliana (Mouse-ear cress), this protein is Probable calcium-binding protein CML46.